A 217-amino-acid chain; its full sequence is Large ribosomal subunit protein uL4 (217 aa).

A disordered region spans residues 42-100 (RAAARQGTHSTKTRGDVSGGGRKPYRQKGTGRARQGSTRAPQFTGGGVVHGPKPRDYSQ).

It belongs to the universal ribosomal protein uL4 family. As to quaternary structure, part of the 50S ribosomal subunit.

One of the primary rRNA binding proteins, this protein initially binds near the 5'-end of the 23S rRNA. It is important during the early stages of 50S assembly. It makes multiple contacts with different domains of the 23S rRNA in the assembled 50S subunit and ribosome. Functionally, forms part of the polypeptide exit tunnel. This is Large ribosomal subunit protein uL4 from Mycobacterium avium (strain 104).